We begin with the raw amino-acid sequence, 802 residues long: Oligophrenin-1 (802 aa).

Residues 265-368 form the PH domain; the sequence is QPTIEGYLYT…WMEAMDGKEP (104 aa). The region spanning 380 to 564 is the Rho-GAP domain; it reads MELNEVGFKF…ILIEHFGKIY (185 aa). 2 disordered regions span residues 606–665 and 681–802; these read SLDE…SEPC and GTKA…GDES. Over residues 617–627 the composition is skewed to polar residues; it reads QTPNGTITSNL. Over residues 716-732 the composition is skewed to basic and acidic residues; sequence HHKEGDTDGFSKVRPPG.

Interacts with HOMER1. Interacts with AMPA receptor complexes. Interacts with SH3GL2 (endophilin-A1). Interacts (via C-terminus) with NR1D1.

The protein localises to the postsynapse. The protein resides in the presynapse. It is found in the cell projection. It localises to the axon. Its subcellular location is the dendritic spine. The protein localises to the dendrite. The protein resides in the cytoplasm. Its function is as follows. Stimulates GTP hydrolysis of members of the Rho family. Its action on RHOA activity and signaling is implicated in growth and stabilization of dendritic spines, and therefore in synaptic function. Critical for the stabilization of AMPA receptors at postsynaptic sites. Critical for the regulation of synaptic vesicle endocytosis at presynaptic terminals. Required for the localization of NR1D1 to dendrites, can suppress its repressor activity and protect it from proteasomal degradation. The sequence is that of Oligophrenin-1 (Ophn1) from Mus musculus (Mouse).